The primary structure comprises 66 residues: MAKGKDVRVRIILECASCVRNGINKELPGISRYITQKSRHNTPNRLELRKYCHYCRTHTIHGEIKK.

The protein belongs to the bacterial ribosomal protein bL33 family.

The protein localises to the plastid. It is found in the chloroplast. The sequence is that of Large ribosomal subunit protein bL33c from Dioscorea elephantipes (Elephant's foot yam).